A 360-amino-acid chain; its full sequence is MKTSMQRKLDQLTTRLAELNDLLSREDITSNLDQYRKLTREHAELGPVVDHYALWRQAMNDATTAQELLADASMRDFAEDEIRAARERMEKLGAELQKMLLPKDPNDDRNIFLEIRAGTGGDESALFAGDLLRMYLRFAERNRWQVEMMSASESDLGGYKEVIVRIAGEAAYSKLKFESGGHRVQRVPATETQGRIHTSACTVAVMPEADEIGEVEINPADLRIDTFRASGAGGQHINKTDSAVRVTHLPTGIVVECQDDRSQHKNKDRALKVLAARIKDKQSHEQQAKEAATRKSLIGSGDRSERIRTYNFPQGRLTDHRINLTLYRLDAIMDGDLDELIAALVSEHQAELLASLGDAD.

Glutamine 235 bears the N5-methylglutamine mark. Residues 280–293 (DKQSHEQQAKEAAT) show a composition bias toward basic and acidic residues. The interval 280–300 (DKQSHEQQAKEAATRKSLIGS) is disordered.

Belongs to the prokaryotic/mitochondrial release factor family. In terms of processing, methylated by PrmC. Methylation increases the termination efficiency of RF1.

The protein resides in the cytoplasm. In terms of biological role, peptide chain release factor 1 directs the termination of translation in response to the peptide chain termination codons UAG and UAA. The protein is Peptide chain release factor 1 of Paraburkholderia phytofirmans (strain DSM 17436 / LMG 22146 / PsJN) (Burkholderia phytofirmans).